Here is a 35-residue protein sequence, read N- to C-terminus: Photosystem II reaction center protein T (35 aa).

A helical transmembrane segment spans residues 3–23 (ALVYTFLLVSTLGIIFFAIFF).

Belongs to the PsbT family. In terms of assembly, PSII is composed of 1 copy each of membrane proteins PsbA, PsbB, PsbC, PsbD, PsbE, PsbF, PsbH, PsbI, PsbJ, PsbK, PsbL, PsbM, PsbT, PsbY, PsbZ, Psb30/Ycf12, at least 3 peripheral proteins of the oxygen-evolving complex and a large number of cofactors. It forms dimeric complexes.

It is found in the plastid. Its subcellular location is the chloroplast thylakoid membrane. Its function is as follows. Found at the monomer-monomer interface of the photosystem II (PS II) dimer, plays a role in assembly and dimerization of PSII. PSII is a light-driven water plastoquinone oxidoreductase, using light energy to abstract electrons from H(2)O, generating a proton gradient subsequently used for ATP formation. This chain is Photosystem II reaction center protein T, found in Bassia hyssopifolia (Fivehorn smotherweed).